The following is a 255-amino-acid chain: Triosephosphate isomerase (255 aa).

Substrate is bound at residue 9–11; sequence NWK. Residue H95 is the Electrophile of the active site. Residue E167 is the Proton acceptor of the active site. Residues G173, S212, and 233 to 234 contribute to the substrate site; that span reads GG.

Belongs to the triosephosphate isomerase family. Homodimer.

Its subcellular location is the cytoplasm. It carries out the reaction D-glyceraldehyde 3-phosphate = dihydroxyacetone phosphate. It participates in carbohydrate biosynthesis; gluconeogenesis. It functions in the pathway carbohydrate degradation; glycolysis; D-glyceraldehyde 3-phosphate from glycerone phosphate: step 1/1. Its function is as follows. Involved in the gluconeogenesis. Catalyzes stereospecifically the conversion of dihydroxyacetone phosphate (DHAP) to D-glyceraldehyde-3-phosphate (G3P). The protein is Triosephosphate isomerase of Salmonella dublin (strain CT_02021853).